A 234-amino-acid chain; its full sequence is Phosphoglycolate phosphatase (234 aa).

D15 (nucleophile) is an active-site residue. Mg(2+) is bound by residues D15, D17, and D177.

The protein belongs to the HAD-like hydrolase superfamily. CbbY/CbbZ/Gph/YieH family. Monomer. Mg(2+) is required as a cofactor. Chloride serves as cofactor.

It carries out the reaction 2-phosphoglycolate + H2O = glycolate + phosphate. Its pathway is organic acid metabolism; glycolate biosynthesis; glycolate from 2-phosphoglycolate: step 1/1. In terms of biological role, specifically catalyzes the dephosphorylation of 2-phosphoglycolate. Is involved in the dissimilation of the intracellular 2-phosphoglycolate formed during the DNA repair of 3'-phosphoglycolate ends, a major class of DNA lesions induced by oxidative stress. The sequence is that of Phosphoglycolate phosphatase from Photorhabdus laumondii subsp. laumondii (strain DSM 15139 / CIP 105565 / TT01) (Photorhabdus luminescens subsp. laumondii).